Reading from the N-terminus, the 511-residue chain is ATP synthase subunit alpha 2 (511 aa).

173-180 (GDRQTGKS) serves as a coordination point for ATP.

It belongs to the ATPase alpha/beta chains family. F-type ATPases have 2 components, CF(1) - the catalytic core - and CF(0) - the membrane proton channel. CF(1) has five subunits: alpha(3), beta(3), gamma(1), delta(1), epsilon(1). CF(0) has three main subunits: a(1), b(2) and c(9-12). The alpha and beta chains form an alternating ring which encloses part of the gamma chain. CF(1) is attached to CF(0) by a central stalk formed by the gamma and epsilon chains, while a peripheral stalk is formed by the delta and b chains.

Its subcellular location is the cell inner membrane. The enzyme catalyses ATP + H2O + 4 H(+)(in) = ADP + phosphate + 5 H(+)(out). Functionally, produces ATP from ADP in the presence of a proton gradient across the membrane. The alpha chain is a regulatory subunit. This chain is ATP synthase subunit alpha 2, found in Nitrosospira multiformis (strain ATCC 25196 / NCIMB 11849 / C 71).